Reading from the N-terminus, the 79-residue chain is Small cysteine-rich protein 2 (79 aa).

Residues 1–21 (MRSQHVLILLLGLVCASQVLG) form the signal peptide. Positions 22 to 35 (KHLTKVKAKALHYD) are excised as a propeptide.

It belongs to the Cnidaria small cysteine-rich protein (SCRiP) family. delta subfamily. Contains 4 disulfide bonds.

It localises to the secreted. The protein localises to the nematocyst. In terms of biological role, this recombinant protein induces severe neurotoxicity on zebrafish larvae (Danio rerio) at a concentration of 230 mg/ml, but does not show toxicity when injected in blowfly larvae (Sarcophaga falculata). All fish incubated with this protein died within 200 minutes of exposure. Has also been claimed to be implied in calcification, but this function seems improbable. The sequence is that of Small cysteine-rich protein 2 from Acropora millepora (Staghorn coral).